The chain runs to 586 residues: Phosphoenolpyruvate-protein phosphotransferase (586 aa).

The active-site Tele-phosphohistidine intermediate is histidine 201. The phosphoenolpyruvate site is built by arginine 308 and arginine 345. Residues glutamate 446 and aspartate 470 each contribute to the Mg(2+) site. Phosphoenolpyruvate-binding positions include 469 to 470 (ND) and arginine 480. Cysteine 517 serves as the catalytic Proton donor.

It belongs to the PEP-utilizing enzyme family. As to quaternary structure, homodimer. Mg(2+) is required as a cofactor.

It is found in the cytoplasm. It carries out the reaction L-histidyl-[protein] + phosphoenolpyruvate = N(pros)-phospho-L-histidyl-[protein] + pyruvate. Functionally, general (non sugar-specific) component of the phosphoenolpyruvate-dependent sugar phosphotransferase system (sugar PTS). This major carbohydrate active-transport system catalyzes the phosphorylation of incoming sugar substrates concomitantly with their translocation across the cell membrane. Enzyme I transfers the phosphoryl group from phosphoenolpyruvate (PEP) to the phosphoryl carrier protein (HPr). In Cupriavidus necator (strain ATCC 17699 / DSM 428 / KCTC 22496 / NCIMB 10442 / H16 / Stanier 337) (Ralstonia eutropha), this protein is Phosphoenolpyruvate-protein phosphotransferase.